Reading from the N-terminus, the 380-residue chain is Chaperone protein DnaJ (380 aa).

The J domain occupies 5-70 (DYYEILGVAK…QKRAAYDQYG (66 aa)). Residues 135–213 (GVSKEIRIPT…CHGHGRVEKS (79 aa)) form a CR-type zinc finger. Residues Cys-148, Cys-151, Cys-165, Cys-168, Cys-187, Cys-190, Cys-201, and Cys-204 each contribute to the Zn(2+) site. 4 CXXCXGXG motif repeats span residues 148–155 (CGVCHGSG), 165–172 (CSTCHGAG), 187–194 (CPTCHGRG), and 201–208 (CNACHGHG).

This sequence belongs to the DnaJ family. In terms of assembly, homodimer. The cofactor is Zn(2+).

The protein resides in the cytoplasm. Participates actively in the response to hyperosmotic and heat shock by preventing the aggregation of stress-denatured proteins and by disaggregating proteins, also in an autonomous, DnaK-independent fashion. Unfolded proteins bind initially to DnaJ; upon interaction with the DnaJ-bound protein, DnaK hydrolyzes its bound ATP, resulting in the formation of a stable complex. GrpE releases ADP from DnaK; ATP binding to DnaK triggers the release of the substrate protein, thus completing the reaction cycle. Several rounds of ATP-dependent interactions between DnaJ, DnaK and GrpE are required for fully efficient folding. Also involved, together with DnaK and GrpE, in the DNA replication of plasmids through activation of initiation proteins. The polypeptide is Chaperone protein DnaJ (Erwinia tasmaniensis (strain DSM 17950 / CFBP 7177 / CIP 109463 / NCPPB 4357 / Et1/99)).